Reading from the N-terminus, the 53-residue chain is uncharacterized protein (53 aa).

Belongs to the ycf15 family.

It is found in the plastid. It localises to the chloroplast. This is an uncharacterized protein from Helianthus annuus (Common sunflower).